Reading from the N-terminus, the 278-residue chain is Large ribosomal subunit protein uL2 (278 aa).

Disordered regions lie at residues 33–57 (LIRP…KGGG) and 224–278 (VVMN…GKKR). Over residues 45 to 57 (AHGRITTRHKGGG) the composition is skewed to basic residues. The span at 253-268 (PEGRTRKPNKASDKLI) shows a compositional bias: basic and acidic residues. Residues 269–278 (VRRRRTGKKR) are compositionally biased toward basic residues.

Belongs to the universal ribosomal protein uL2 family. Part of the 50S ribosomal subunit. Forms a bridge to the 30S subunit in the 70S ribosome.

In terms of biological role, one of the primary rRNA binding proteins. Required for association of the 30S and 50S subunits to form the 70S ribosome, for tRNA binding and peptide bond formation. It has been suggested to have peptidyltransferase activity; this is somewhat controversial. Makes several contacts with the 16S rRNA in the 70S ribosome. In Mycobacteroides abscessus (strain ATCC 19977 / DSM 44196 / CCUG 20993 / CIP 104536 / JCM 13569 / NCTC 13031 / TMC 1543 / L948) (Mycobacterium abscessus), this protein is Large ribosomal subunit protein uL2.